The sequence spans 130 residues: Iron-sulfur cluster assembly 1 homolog, mitochondrial (130 aa).

A mitochondrion-targeting transit peptide spans 1 to 24 (MATRVVATATVRAVKGRKLIPTRA). Cys-58, Cys-122, and Cys-124 together coordinate Fe cation.

Belongs to the HesB/IscA family. In terms of assembly, interacts with cry. In terms of tissue distribution, detected in head.

The protein resides in the mitochondrion. Involved in the assembly of mitochondrial iron-sulfur proteins. Probably involved in the binding of an intermediate of Fe/S cluster assembly. Required for maintenance of circadian rhythms under constant darkness. This Drosophila melanogaster (Fruit fly) protein is Iron-sulfur cluster assembly 1 homolog, mitochondrial.